The sequence spans 463 residues: Glycogen synthase (463 aa).

Lysine 15 is a binding site for ADP-alpha-D-glucose.

The protein belongs to the glycosyltransferase 1 family. Bacterial/plant glycogen synthase subfamily.

It carries out the reaction [(1-&gt;4)-alpha-D-glucosyl](n) + ADP-alpha-D-glucose = [(1-&gt;4)-alpha-D-glucosyl](n+1) + ADP + H(+). It functions in the pathway glycan biosynthesis; glycogen biosynthesis. In terms of biological role, synthesizes alpha-1,4-glucan chains using ADP-glucose. This chain is Glycogen synthase, found in Aquifex aeolicus (strain VF5).